The following is a 186-amino-acid chain: Casparian strip membrane protein 5 (186 aa).

Topologically, residues Met-1–Ser-25 are cytoplasmic. A helical transmembrane segment spans residues Ile-26–Met-46. The Extracellular segment spans residues Gly-47–Thr-73. Asn-50 is a glycosylation site (N-linked (GlcNAc...) asparagine). A helical transmembrane segment spans residues Phe-74 to Ile-94. The Cytoplasmic segment spans residues Val-95–Arg-106. A helical transmembrane segment spans residues Ile-107 to Ala-127. Over Ala-128–Arg-156 the chain is Extracellular. A helical membrane pass occupies residues Ile-157 to Met-177. The Cytoplasmic segment spans residues Ser-178 to Asn-186.

Belongs to the Casparian strip membrane proteins (CASP) family. As to quaternary structure, homodimer and heterodimers.

It is found in the cell membrane. In terms of biological role, regulates membrane-cell wall junctions and localized cell wall deposition. Required for establishment of the Casparian strip membrane domain (CSD) and the subsequent formation of Casparian strips, a cell wall modification of the root endodermis that determines an apoplastic barrier between the intraorganismal apoplasm and the extraorganismal apoplasm and prevents lateral diffusion. The sequence is that of Casparian strip membrane protein 5 from Ricinus communis (Castor bean).